A 251-amino-acid polypeptide reads, in one-letter code: BRI3-binding protein (251 aa).

4 helical membrane passes run 13 to 33 (AGLL…PGAQ), 125 to 145 (ALLL…TLGF), 146 to 166 (TFSV…VVLF), and 185 to 205 (VLPL…GFYW). Positions 217–247 (NPSVEEKLEHLEKQVRLLNIRLNRVLESLDR) form a coiled coil. N6-acetyllysine is present on Lys-229. Ser-248 bears the Phosphoserine mark.

In terms of assembly, interacts with LETMD1. Interacts with BRI3 (isoforms 1 and 2); the interaction with isoform 2 is weaker than with isoform 1. Interacts with BRI3; the interaction is weak. Interacts with TMEM238L. Most abundantly expressed in brain, liver and kidney. Overexpressed in leukemia and lymphoma cell lines, as well as in various carcinomas.

The protein localises to the mitochondrion outer membrane. Involved in tumorigenesis and may function by stabilizing p53/TP53. This Homo sapiens (Human) protein is BRI3-binding protein.